The sequence spans 856 residues: Leucine--tRNA ligase (856 aa).

A 'HIGH' region motif is present at residues 53 to 63 (PYPSGNLHMGH). The 'KMSKS' region motif lies at 622 to 626 (KMSKS). An ATP-binding site is contributed by K625.

Belongs to the class-I aminoacyl-tRNA synthetase family.

Its subcellular location is the cytoplasm. The enzyme catalyses tRNA(Leu) + L-leucine + ATP = L-leucyl-tRNA(Leu) + AMP + diphosphate. This chain is Leucine--tRNA ligase, found in Prochlorococcus marinus (strain MIT 9215).